We begin with the raw amino-acid sequence, 553 residues long: CTP synthase (553 aa).

The amidoligase domain stretch occupies residues 1–270; sequence MTKYVFVTGG…DRLICEELRL (270 aa). Ser13 contributes to the CTP binding site. Position 13 (Ser13) interacts with UTP. Residues 14–19 and Asp71 each bind ATP; that span reads SLGKGI. Residues Asp71 and Glu144 each contribute to the Mg(2+) site. CTP is bound by residues 151–153, 191–196, and Lys227; these read DIE and KTKPTQ. Residues 191 to 196 and Lys227 each bind UTP; that span reads KTKPTQ. One can recognise a Glutamine amidotransferase type-1 domain in the interval 295–547; it reads TIGMVGKYVD…VQAALACQQT (253 aa). Residue Gly356 participates in L-glutamine binding. Cys383 functions as the Nucleophile; for glutamine hydrolysis in the catalytic mechanism. L-glutamine is bound by residues 384-387, Glu407, and Arg473; that span reads LGMQ. Residues His520 and Glu522 contribute to the active site.

This sequence belongs to the CTP synthase family. As to quaternary structure, homotetramer.

The enzyme catalyses UTP + L-glutamine + ATP + H2O = CTP + L-glutamate + ADP + phosphate + 2 H(+). The catalysed reaction is L-glutamine + H2O = L-glutamate + NH4(+). It carries out the reaction UTP + NH4(+) + ATP = CTP + ADP + phosphate + 2 H(+). It participates in pyrimidine metabolism; CTP biosynthesis via de novo pathway; CTP from UDP: step 2/2. Allosterically activated by GTP, when glutamine is the substrate; GTP has no effect on the reaction when ammonia is the substrate. The allosteric effector GTP functions by stabilizing the protein conformation that binds the tetrahedral intermediate(s) formed during glutamine hydrolysis. Inhibited by the product CTP, via allosteric rather than competitive inhibition. Its function is as follows. Catalyzes the ATP-dependent amination of UTP to CTP with either L-glutamine or ammonia as the source of nitrogen. Regulates intracellular CTP levels through interactions with the four ribonucleotide triphosphates. This is CTP synthase from Burkholderia mallei (strain NCTC 10247).